The chain runs to 130 residues: Small ribosomal subunit protein uS11 (130 aa).

The protein belongs to the universal ribosomal protein uS11 family. Part of the 30S ribosomal subunit. Interacts with proteins S7 and S18. Binds to IF-3.

Functionally, located on the platform of the 30S subunit, it bridges several disparate RNA helices of the 16S rRNA. Forms part of the Shine-Dalgarno cleft in the 70S ribosome. This Moorella thermoacetica (strain ATCC 39073 / JCM 9320) protein is Small ribosomal subunit protein uS11.